Consider the following 162-residue polypeptide: Ribonuclease P protein component (162 aa).

The segment at 1 to 62 is disordered; sequence MDEKDLATQP…GPPKAGGRLL (62 aa). Over residues 21 to 36 the composition is skewed to basic and acidic residues; the sequence is GPHEDPRRQERAEAQA.

Belongs to the RnpA family. As to quaternary structure, consists of a catalytic RNA component (M1 or rnpB) and a protein subunit.

It catalyses the reaction Endonucleolytic cleavage of RNA, removing 5'-extranucleotides from tRNA precursor.. RNaseP catalyzes the removal of the 5'-leader sequence from pre-tRNA to produce the mature 5'-terminus. It can also cleave other RNA substrates such as 4.5S RNA. The protein component plays an auxiliary but essential role in vivo by binding to the 5'-leader sequence and broadening the substrate specificity of the ribozyme. In Thermus aquaticus, this protein is Ribonuclease P protein component.